The chain runs to 372 residues: DNA replication and repair protein RecF (372 aa).

An ATP-binding site is contributed by 30–37 (GANGQGKT).

It belongs to the RecF family.

It is found in the cytoplasm. Its function is as follows. The RecF protein is involved in DNA metabolism; it is required for DNA replication and normal SOS inducibility. RecF binds preferentially to single-stranded, linear DNA. It also seems to bind ATP. The protein is DNA replication and repair protein RecF of Heliobacterium modesticaldum (strain ATCC 51547 / Ice1).